The following is a 293-amino-acid chain: Ribosomal protein L11 methyltransferase (293 aa).

The S-adenosyl-L-methionine site is built by threonine 145, glycine 166, aspartate 188, and asparagine 230.

Belongs to the methyltransferase superfamily. PrmA family.

It localises to the cytoplasm. It catalyses the reaction L-lysyl-[protein] + 3 S-adenosyl-L-methionine = N(6),N(6),N(6)-trimethyl-L-lysyl-[protein] + 3 S-adenosyl-L-homocysteine + 3 H(+). Methylates ribosomal protein L11. This is Ribosomal protein L11 methyltransferase from Escherichia coli (strain 55989 / EAEC).